Consider the following 595-residue polypeptide: Beta-hexosaminidase 1 (595 aa).

Positions 1 to 20 (MRFAYLATLAGSLLAGLAQA) are cleaved as a signal peptide. An N-linked (GlcNAc...) asparagine glycan is attached at Asn-313.

This sequence belongs to the glycosyl hydrolase 20 family.

The catalysed reaction is Hydrolysis of terminal non-reducing N-acetyl-D-hexosamine residues in N-acetyl-beta-D-hexosaminides.. Functionally, beta-hexosaminidase that shows a broad substrate specificity. The chain is Beta-hexosaminidase 1 from Coccidioides posadasii (strain RMSCC 757 / Silveira) (Valley fever fungus).